Consider the following 130-residue polypeptide: Small ribosomal subunit protein uS11 (130 aa).

It belongs to the universal ribosomal protein uS11 family. In terms of assembly, part of the 30S ribosomal subunit. Interacts with proteins S7 and S18. Binds to IF-3.

In terms of biological role, located on the platform of the 30S subunit, it bridges several disparate RNA helices of the 16S rRNA. Forms part of the Shine-Dalgarno cleft in the 70S ribosome. The chain is Small ribosomal subunit protein uS11 from Tropheryma whipplei (strain TW08/27) (Whipple's bacillus).